The following is a 150-amino-acid chain: Protein Smg homolog (150 aa).

The protein belongs to the Smg family.

In Methylibium petroleiphilum (strain ATCC BAA-1232 / LMG 22953 / PM1), this protein is Protein Smg homolog.